We begin with the raw amino-acid sequence, 373 residues long: MEFKLKHKDGMARVCEITTAHSTFLTPVFMPVGTVGAVKSLDANDMKNELDAKIILANTYHMYLRPTSKVVKDFGGLHGFTKFDRSFLTDSGGFQAFSLSKNSKHFNEGIEFKSHIDGSRHLFTPKSVLDTQYDFNSDIMMILDDLVALPATKERVKISVDRTILWAKEAITYHKNMQNKGIGIGQNIFGIIQGGTDYEERKRCALSLNEMPFDGLAIGGLSVGEENALMYETVQNLNPYLDENRPRYLMGVGTPEDLVENVERGVDMFDCVMPTRNARNGTFFTSFGKFNIKKAEFINDHEVIDSTCSCYTCRNFSRGYLNHLFKAKELTFFRLASLHNLHYYLELARKMREAILNNSFTQFKRNFYHLRGK.

Asp-90 functions as the Proton acceptor in the catalytic mechanism. Residues 90-94 (DSGGF), Asp-144, Gln-193, and Gly-220 contribute to the substrate site. Positions 251 to 257 (GVGTPED) are RNA binding. Asp-270 acts as the Nucleophile in catalysis. The interval 275–279 (TRNAR) is RNA binding; important for wobble base 34 recognition. Residues Cys-308, Cys-310, Cys-313, and His-339 each contribute to the Zn(2+) site.

Belongs to the queuine tRNA-ribosyltransferase family. As to quaternary structure, homodimer. Within each dimer, one monomer is responsible for RNA recognition and catalysis, while the other monomer binds to the replacement base PreQ1. Requires Zn(2+) as cofactor.

It catalyses the reaction 7-aminomethyl-7-carbaguanine + guanosine(34) in tRNA = 7-aminomethyl-7-carbaguanosine(34) in tRNA + guanine. It functions in the pathway tRNA modification; tRNA-queuosine biosynthesis. Catalyzes the base-exchange of a guanine (G) residue with the queuine precursor 7-aminomethyl-7-deazaguanine (PreQ1) at position 34 (anticodon wobble position) in tRNAs with GU(N) anticodons (tRNA-Asp, -Asn, -His and -Tyr). Catalysis occurs through a double-displacement mechanism. The nucleophile active site attacks the C1' of nucleotide 34 to detach the guanine base from the RNA, forming a covalent enzyme-RNA intermediate. The proton acceptor active site deprotonates the incoming PreQ1, allowing a nucleophilic attack on the C1' of the ribose to form the product. After dissociation, two additional enzymatic reactions on the tRNA convert PreQ1 to queuine (Q), resulting in the hypermodified nucleoside queuosine (7-(((4,5-cis-dihydroxy-2-cyclopenten-1-yl)amino)methyl)-7-deazaguanosine). The chain is Queuine tRNA-ribosyltransferase from Campylobacter jejuni subsp. jejuni serotype O:2 (strain ATCC 700819 / NCTC 11168).